The chain runs to 198 residues: Ribonuclease HII (198 aa).

In terms of domain architecture, RNase H type-2 spans 1–198; that stretch reads MLCGIDEAGR…QRRSFFVKNL (198 aa). 3 residues coordinate a divalent metal cation: Asp-6, Glu-7, and Asp-112.

It belongs to the RNase HII family. The cofactor is Mn(2+). Mg(2+) serves as cofactor.

The protein resides in the cytoplasm. It carries out the reaction Endonucleolytic cleavage to 5'-phosphomonoester.. In terms of biological role, endonuclease that specifically degrades the RNA of RNA-DNA hybrids. This is Ribonuclease HII from Treponema denticola (strain ATCC 35405 / DSM 14222 / CIP 103919 / JCM 8153 / KCTC 15104).